The chain runs to 1253 residues: Guanine nucleotide exchange factor SDC25 (1253 aa).

An SH3 domain is found at 26 to 98; that stretch reads QPIDVVECTY…PPSFTRSILN (73 aa). Residues 624 to 649 are disordered; it reads LNLDNAKDKKNGSQNTDIQEEEDEYE. The region spanning 782 to 914 is the N-terminal Ras-GEF domain; it reads GPIVRIKGGS…ELLKEVNQKF (133 aa). Residues 952 to 1199 form the Ras-GEF domain; the sequence is VDPVLFATQL…QYQLSLIIEP (248 aa). The tract at residues 1202-1253 is disordered; it reads RKKVVPNSNSNNKSQEKSRDDQTDEGKTSTKKDRFPKFQLHKTKKKAPKVSK. Residues 1215–1237 show a composition bias toward basic and acidic residues; sequence SQEKSRDDQTDEGKTSTKKDRFP. A compositionally biased stretch (basic residues) spans 1240–1253; it reads QLHKTKKKAPKVSK.

Functionally, promotes the exchange of Ras-bound GDP by GTP. This is Guanine nucleotide exchange factor SDC25 (SDC25) from Saccharomyces cerevisiae (Baker's yeast).